The following is a 424-amino-acid chain: COUP transcription factor 1 (424 aa).

The segment at 1–82 (MAMVVSSWRD…QGPPGSGQSQ (82 aa)) is disordered. The segment covering 39 to 68 (EQQQQQAGSGAPHTPQTPGQPGAPATPGTA) has biased composition (low complexity). A DNA-binding region (nuclear receptor) is located at residues 84–159 (HIECVVCGDK…VGMRREAVQR (76 aa)). 2 NR C4-type zinc fingers span residues 87 to 107 (CVVC…CEGC) and 123 to 147 (CRAN…LKKC). One can recognise an NR LBD domain in the interval 185–411 (YLSGYISLLL…TLIRDMLLSG (227 aa)).

Belongs to the nuclear hormone receptor family. NR2 subfamily. Binds DNA as dimer; homodimer and probable heterodimer with NR2F6. Interacts with GTF2B; this interaction is direct. Interacts with COPS2.

The protein resides in the nucleus. In terms of biological role, coup (chicken ovalbumin upstream promoter) transcription factor binds to the ovalbumin promoter and, in conjunction with another protein (S300-II) stimulates initiation of transcription. Binds to both direct repeats and palindromes of the 5'-AGGTCA-3' motif. Represses transcriptional activity of LHCG. This Bos taurus (Bovine) protein is COUP transcription factor 1 (NR2F1).